We begin with the raw amino-acid sequence, 356 residues long: MIKVAIVDDSAVVRQVLSSMLENQPDITLLGCARDPLFALKLFEQQWPDVIILDIEMPRMDGITFLKKVMAEKPTPVVICSTLTEQGASVTIAALAAGAVDIITKPKLGLKGFLEESQARLLQAIRAAAKASVAKLRVNGLAKPMPVIAKHNADVVLASTNHALNQTTDRVVALGTSTGGTHALEYVLTALPRTSAGIVVVQHMPEHFTAAFASRLNGVCEMEVKEAEDNDRVMPGLVLIANGGKHMLLQRSGAQYRVQLKDGPLVSRHRPSVDVLFRSVANAAGKNALGVIMTGMGDDGARGLLEMHQCGAITLAQDEASCVVYGMPKEAVKLGAVSRQVALDNIAEEIIAFTKQ.

In terms of domain architecture, Response regulatory spans 3 to 120 (KVAIVDDSAV…KGFLEESQAR (118 aa)). Asp-54 is subject to 4-aspartylphosphate. The CheB-type methylesterase domain occupies 165 to 356 (NQTTDRVVAL…AEEIIAFTKQ (192 aa)). Active-site residues include Ser-177, His-203, and Asp-299.

Belongs to the CheB family. In terms of processing, phosphorylated by CheA. Phosphorylation of the N-terminal regulatory domain activates the methylesterase activity.

It localises to the cytoplasm. It catalyses the reaction [protein]-L-glutamate 5-O-methyl ester + H2O = L-glutamyl-[protein] + methanol + H(+). The catalysed reaction is L-glutaminyl-[protein] + H2O = L-glutamyl-[protein] + NH4(+). Involved in chemotaxis. Part of a chemotaxis signal transduction system that modulates chemotaxis in response to various stimuli. Catalyzes the demethylation of specific methylglutamate residues introduced into the chemoreceptors (methyl-accepting chemotaxis proteins or MCP) by CheR. Also mediates the irreversible deamidation of specific glutamine residues to glutamic acid. The polypeptide is Protein-glutamate methylesterase/protein-glutamine glutaminase 3 (Shewanella oneidensis (strain ATCC 700550 / JCM 31522 / CIP 106686 / LMG 19005 / NCIMB 14063 / MR-1)).